The sequence spans 134 residues: Profilin-3 (134 aa).

A disulfide bridge connects residues C13 and C118. The short motif at 84–100 is the Involved in PIP2 interaction element; that stretch reads AVIRGKKGSGGITIKKT. Phosphothreonine is present on T114.

Belongs to the profilin family. As to quaternary structure, occurs in many kinds of cells as a complex with monomeric actin in a 1:1 ratio. Post-translationally, phosphorylated by MAP kinases.

It is found in the cytoplasm. The protein resides in the cytoskeleton. Its function is as follows. Binds to actin and affects the structure of the cytoskeleton. At high concentrations, profilin prevents the polymerization of actin, whereas it enhances it at low concentrations. The protein is Profilin-3 of Olea europaea (Common olive).